Consider the following 321-residue polypeptide: Methionine import ATP-binding protein MetN (321 aa).

Positions 2 to 241 constitute an ABC transporter domain; that stretch reads INAVDLHKVY…PGSLLARSLF (240 aa). Position 38 to 45 (38 to 45) interacts with ATP; that stretch reads GPSGAGKS.

The protein belongs to the ABC transporter superfamily. Methionine importer (TC 3.A.1.24) family. In terms of assembly, the complex is composed of two ATP-binding proteins (MetN), two transmembrane proteins (MetI) and a solute-binding protein (MetQ).

Its subcellular location is the cell membrane. It catalyses the reaction L-methionine(out) + ATP + H2O = L-methionine(in) + ADP + phosphate + H(+). The enzyme catalyses D-methionine(out) + ATP + H2O = D-methionine(in) + ADP + phosphate + H(+). In terms of biological role, part of the ABC transporter complex MetNIQ involved in methionine import. Responsible for energy coupling to the transport system. In Thermobifida fusca (strain YX), this protein is Methionine import ATP-binding protein MetN.